We begin with the raw amino-acid sequence, 138 residues long: MRIIENFNEFGEWGMTWRDGELVGFINGEEVVRRHLPADPLPTTLEIAADDTELRAGEKDTVRVILRALDQGGNVLSFFDDPVEVSLQGPGRIVGPSLLSFKGGAVGVYVEAGNEAGHLTLSATCRPFGTQRITFNVT.

It belongs to the glycosyl hydrolase 2 family.

It carries out the reaction Hydrolysis of terminal non-reducing beta-D-galactose residues in beta-D-galactosides.. The protein is Beta-galactosidase (lacZ) of Rhizobium radiobacter (Agrobacterium tumefaciens).